The sequence spans 148 residues: Lysozyme C (148 aa).

An N-terminal signal peptide occupies residues 1 to 18 (MKALIILGLVLLSVTVQG). Positions 19-148 (KIFERCELAR…VSQYVEGCGV (130 aa)) constitute a C-type lysozyme domain. 4 disulfides stabilise this stretch: C24/C146, C48/C134, C83/C99, and C95/C113. Catalysis depends on residues E53 and D71.

This sequence belongs to the glycosyl hydrolase 22 family. In terms of assembly, monomer.

The enzyme catalyses Hydrolysis of (1-&gt;4)-beta-linkages between N-acetylmuramic acid and N-acetyl-D-glucosamine residues in a peptidoglycan and between N-acetyl-D-glucosamine residues in chitodextrins.. Its function is as follows. Lysozymes have primarily a bacteriolytic function; those in tissues and body fluids are associated with the monocyte-macrophage system and enhance the activity of immunoagents. The chain is Lysozyme C (LYZ) from Colobus angolensis (Angolan colobus).